Here is a 130-residue protein sequence, read N- to C-terminus: Small ribosomal subunit protein uS9 (130 aa).

Positions 98 to 130 are disordered; the sequence is LKRAGLLTRDPRMKERKKPGLKKARRSPQFSKR. Residues 111-130 are compositionally biased toward basic residues; that stretch reads KERKKPGLKKARRSPQFSKR.

It belongs to the universal ribosomal protein uS9 family.

The chain is Small ribosomal subunit protein uS9 from Staphylococcus saprophyticus subsp. saprophyticus (strain ATCC 15305 / DSM 20229 / NCIMB 8711 / NCTC 7292 / S-41).